The primary structure comprises 439 residues: MTGRRLARFPAFRAGVAQDDDVGSTLSQGSTTGVLSGPNWSYWPSRVLGSADPTTIAHRHGTHRITSPDETWLALQPFLAPAGITGVADVTWLDCLGIPTVQAVRPASLTLSVSQGKAASYRAAQVSAVMESLEGWHAENVTADLWSATARDLEADLTYDPAQLRHRPGSLYHAGVKLDWMVATTLLTGRRTWVPWTAVLVNVATRDCWEPPMFEMDTTGLASGNCYDEATLHALYEVMERHSVAAAVAGETMFEVPTDDVAGSDSAHLVEMIRDAGDDVDLARIDVWDGYYCFAAELTSATLEVTFGGFGLHHDPNVALSRAITEAAQSRITAISGAREDLPSAIYHRFGRVHTYAKARKTSLRLNRARPTPWRVPDVDSLPELVASAATAVANRSGTEPLAVVCDFADACVPVVKVLAPGLVLSSASPMRTPLQEAE.

The YcaO domain maps to 116-439 (GKAASYRAAQ…PMRTPLQEAE (324 aa)).

This is an uncharacterized protein from Mycobacterium tuberculosis (strain CDC 1551 / Oshkosh).